The chain runs to 322 residues: Digestive cysteine proteinase 1 (322 aa).

Positions 1–16 are cleaved as a signal peptide; that stretch reads MKVVALFLFGLALAAA. A propeptide spans 17 to 105 (activation peptide); it reads NPSWEEFKGK…VFTSTDAAPE (89 aa). Cystine bridges form between Cys-126–Cys-170, Cys-160–Cys-203, and Cys-262–Cys-311. Cys-129 is a catalytic residue. Active-site residues include His-269 and Asn-289.

It belongs to the peptidase C1 family.

Its activity is regulated as follows. Inhibited by E-64, antipain, leupeptin, heavy metal ions, iodoacetic acid, dithionitrobenzene, p-hydroxymercuri-benzoate; activated by mercaptoethanol and dithiothreitol. The sequence is that of Digestive cysteine proteinase 1 (LCP1) from Homarus americanus (American lobster).